The sequence spans 238 residues: MLCFLRGMAFVPFLLVTWSSAAFIISYVVAVLSGHVNPFLPYISDTGTTPPESGIFGFMINFSAFLGAATMYTRYKIVQKQNQTCYFSTPVFNLVSLVLGLVGCFGMGIVANFQELAVPVVHDGGALLAFVCGVVYTLLQSIISYKSCPQWNSLSTCHIRMVISAVSCAAVIPMIVCASLISITKLEWNPREKDYVYHVVSAICEWTVAFGFIFYFLTFIQDFQSVTLRISTEINGDI.

6 helical membrane passes run 9-29 (AFVP…SYVV), 53-73 (SGIF…TMYT), 91-111 (VFNL…GIVA), 116-136 (LAVP…GVVY), 161-181 (MVIS…ASLI), and 200-220 (VSAI…LTFI).

It belongs to the DRAM/TMEM150 family.

Its subcellular location is the lysosome membrane. Functionally, lysosomal modulator of autophagy that plays a central role in p53/TP53-mediated apoptosis. Not involved in p73/TP73-mediated autophagy. This Homo sapiens (Human) protein is DNA damage-regulated autophagy modulator protein 1 (DRAM1).